Reading from the N-terminus, the 122-residue chain is Small ribosomal subunit protein uS13 (122 aa).

The segment at 99 to 122 (RGQRTHTNARTRKGPAKAIAGKKK) is disordered.

The protein belongs to the universal ribosomal protein uS13 family. In terms of assembly, part of the 30S ribosomal subunit. Forms a loose heterodimer with protein S19. Forms two bridges to the 50S subunit in the 70S ribosome.

Its function is as follows. Located at the top of the head of the 30S subunit, it contacts several helices of the 16S rRNA. In the 70S ribosome it contacts the 23S rRNA (bridge B1a) and protein L5 of the 50S subunit (bridge B1b), connecting the 2 subunits; these bridges are implicated in subunit movement. Contacts the tRNAs in the A and P-sites. The protein is Small ribosomal subunit protein uS13 of Rhodopseudomonas palustris (strain BisA53).